The primary structure comprises 744 residues: Junctophilin-3 (744 aa).

Residues 1 to 723 (MSSGGRFNFD…LKSSTGSAPI (723 aa)) are Cytoplasmic-facing. MORN repeat units lie at residues 15-37 (YCGG…KGQG), 39-60 (YTGS…SGNT), 61-82 (YQGT…GKWV), 83-105 (YKGE…GNGA), 107-129 (YEGT…DGGT), and 130-152 (YQGQ…PYGM). The tract at residues 230–252 (SKSSLASQRSKQSSFRSEAGMST) is disordered. Residues 231 to 244 (KSSLASQRSKQSSF) show a composition bias toward low complexity. MORN repeat units follow at residues 288 to 310 (YVGE…DGLK) and 311 to 333 (YEGE…DGTK). S440 bears the Phosphoserine mark. Residue T451 is modified to Phosphothreonine. 2 disordered regions span residues 451-603 (TPLQ…LLEP) and 624-677 (CPQD…ESLR). S457 is modified (phosphoserine). At T471 the chain carries Phosphothreonine. Residues S475 and S506 each carry the phosphoserine modification. S699 and S706 each carry phosphoserine. Residues 724–744 (LVVMVILLNIGVAILFINFFI) form a helical; Anchor for type IV membrane protein membrane-spanning segment.

This sequence belongs to the junctophilin family. As to expression, specifically expressed in brain. Highest levels in the olfactory tubercle, caudate putamen, nucleus accumbens, hippocampal formation, piriform cortex and cerebellar cortex. Expressed in disctete neurons sites. In hippocampal formation, expressed in dendrites of hippocampal pyramidal and denate granule cells. In cerebellum, it is highly expressed in Purkinge cells, while it is weakly expressed in granular cells.

Its subcellular location is the cell membrane. The protein localises to the endoplasmic reticulum membrane. In terms of biological role, junctophilins contribute to the formation of junctional membrane complexes (JMCs) which link the plasma membrane with the endoplasmic or sarcoplasmic reticulum in excitable cells. Provides a structural foundation for functional cross-talk between the cell surface and intracellular calcium release channels. JPH3 is brain-specific and appears to have an active role in certain neurons involved in motor coordination and memory. The chain is Junctophilin-3 (Jph3) from Mus musculus (Mouse).